Consider the following 197-residue polypeptide: ATP synthase subunit delta', mitochondrial (197 aa).

The N-terminal 19 residues, 1-19 (MFRRATSTFLSRASATRRF), are a transit peptide targeting the mitochondrion.

This sequence belongs to the ATPase epsilon chain family. In terms of assembly, F-type ATPases have 2 components, CF(1) - the catalytic core - and CF(0) - the membrane proton channel. CF(1) has five subunits: alpha(3), beta(3), gamma(1), delta(1), epsilon(1). CF(0) has three main subunits: a, b and c.

It localises to the mitochondrion. The protein localises to the mitochondrion inner membrane. In terms of biological role, mitochondrial membrane ATP synthase (F(1)F(0) ATP synthase or Complex V) produces ATP from ADP in the presence of a proton gradient across the membrane which is generated by electron transport complexes of the respiratory chain. F-type ATPases consist of two structural domains, F(1) - containing the extramembraneous catalytic core, and F(0) - containing the membrane proton channel, linked together by a central stalk and a peripheral stalk. During catalysis, ATP turnover in the catalytic domain of F(1) is coupled via a rotary mechanism of the central stalk subunits to proton translocation. Part of the complex F(1) domain and of the central stalk which is part of the complex rotary element. Rotation of the central stalk against the surrounding alpha(3)beta(3) subunits leads to hydrolysis of ATP in three separate catalytic sites on the beta subunits. The chain is ATP synthase subunit delta', mitochondrial from Pisum sativum (Garden pea).